Reading from the N-terminus, the 437-residue chain is GTPase Der (437 aa).

EngA-type G domains follow at residues Asn-3–Val-167 and Pro-176–Gln-352. GTP contacts are provided by residues Gly-9–Ser-16, Asp-56–Trp-60, Asn-119–Asp-122, Gly-182–Ser-189, Asp-229–Ile-233, and Asn-294–Asp-297. Residues Ile-353–Lys-437 form the KH-like domain.

It belongs to the TRAFAC class TrmE-Era-EngA-EngB-Septin-like GTPase superfamily. EngA (Der) GTPase family. Associates with the 50S ribosomal subunit.

Functionally, GTPase that plays an essential role in the late steps of ribosome biogenesis. The polypeptide is GTPase Der (Azobacteroides pseudotrichonymphae genomovar. CFP2).